Here is a 960-residue protein sequence, read N- to C-terminus: CWF19-like protein 2 (960 aa).

Disordered regions lie at residues 1–222 (MAAY…AGVV), 261–552 (EFQK…ELIL), 624–648 (AWPVNAPSETLEPRGGRRKRKAIET), and 712–731 (AQKERAGRDEERQRNKAVQE). Positions 13–101 (SIKSRKESKR…KKAKKEKKDE (89 aa)) form a coiled coil. Positions 16 to 52 (SRKESKREERERVIQKAKEKFEKEERRKAERKARGED) are enriched in basic and acidic residues. Residues 73–96 (KTKKAKKEKKAKKSKKEKKKKAKK) show a composition bias toward basic residues. Over residues 108-117 (SSEDSEDEWV) the composition is skewed to acidic residues. Residues 135 to 146 (EATPSSSSASNN) are compositionally biased toward low complexity. The stretch at 163-279 (SVADRRAQKE…EDAAYGERRD (117 aa)) forms a coiled coil. Basic and acidic residues-rich tracts occupy residues 165–181 (ADRRAQKEAEKEAERQK), 261–372 (EFQK…DDLS), and 404–417 (KPVDDVEMSREAGF). The span at 507–518 (SAVQDSETPTLQ) shows a compositional bias: polar residues. Positions 540–605 (SESEEEEEEE…IKDQSKRASK (66 aa)) form a coiled coil. Acidic residues predominate over residues 541–552 (ESEEEEEEELIL). Basic and acidic residues predominate over residues 713-731 (QKERAGRDEERQRNKAVQE).

It belongs to the CWF19 family.

The chain is CWF19-like protein 2 (cwf19l2) from Danio rerio (Zebrafish).